Consider the following 272-residue polypeptide: WIMGHMVNDLSLVDEFLNDGANSLELDVEFSSSGTAQRTHHGFPCDCFRYCTNSEKFSTYLDYIRQLTTPGNSKFRSRLILLVMDLKLNPLSSSAAYNAGADVALNLLNHYWQRGESEARAYIVLSLSTIDGAEFISGFKSTMEKEGFADKYYDKIGWDFSGNEDLQQIRDVLENYGIREHIWQGDGITNCLPRGDSRLKEALNLRYSPSYIYADKVYTWSIDEENSIKHALWLGVDGVMTNHPERVIEVLGKSKYSDKFRLATYDDSPWEK.

The active site involves His5. Positions 25 and 27 each coordinate Mg(2+). Catalysis depends on His41, which acts as the Nucleophile. 2 disulfide bridges follow: Cys45–Cys51 and Cys47–Cys191. Position 85 (Asp85) interacts with Mg(2+).

It belongs to the arthropod phospholipase D family. Class II subfamily. Mg(2+) is required as a cofactor. Expressed by the venom gland.

It is found in the secreted. The catalysed reaction is an N-(acyl)-sphingosylphosphocholine = an N-(acyl)-sphingosyl-1,3-cyclic phosphate + choline. The enzyme catalyses an N-(acyl)-sphingosylphosphoethanolamine = an N-(acyl)-sphingosyl-1,3-cyclic phosphate + ethanolamine. It carries out the reaction a 1-acyl-sn-glycero-3-phosphocholine = a 1-acyl-sn-glycero-2,3-cyclic phosphate + choline. It catalyses the reaction a 1-acyl-sn-glycero-3-phosphoethanolamine = a 1-acyl-sn-glycero-2,3-cyclic phosphate + ethanolamine. In terms of biological role, dermonecrotic toxins cleave the phosphodiester linkage between the phosphate and headgroup of certain phospholipids (sphingolipid and lysolipid substrates), forming an alcohol (often choline) and a cyclic phosphate. This toxin acts on sphingomyelin (SM). It may also act on ceramide phosphoethanolamine (CPE), lysophosphatidylcholine (LPC) and lysophosphatidylethanolamine (LPE), but not on lysophosphatidylserine (LPS), and lysophosphatidylglycerol (LPG). It acts by transphosphatidylation, releasing exclusively cyclic phosphate products as second products. Induces dermonecrosis, hemolysis, increased vascular permeability, edema, inflammatory response, and platelet aggregation. This chain is Dermonecrotic toxin SpeSicTox-betaIB2a, found in Sicarius peruensis (Six-eyed sand spider).